Consider the following 298-residue polypeptide: MQDFSSLLLKLQEYWKNQGCLVIQPYDIPAGAGTFHPATLLRSLDKKPWNVAYVAPSRRPTDGRYGENPNRLGSYYQFQVVIKPSPSNIQELYLKSLEVLGINLNEHDIRFVEDNWESPTLGAWGLGWEVWLDGMEVTQFTYFQQVGGIACSPIPVEITYGLERLAMYVQKVENILEIEWAKNNHDSVRYAQVHLESEYQFSKYHFEVASVTRLLEMFKNAQAEALHCLKNKLPLPAYDLVMLCSHFFNILDARKAISVAERQNYILQIRDLAKGCTILYKEQEEEREERLKNALTKA.

The protein belongs to the class-II aminoacyl-tRNA synthetase family. In terms of assembly, tetramer of two alpha and two beta subunits.

It localises to the cytoplasm. The enzyme catalyses tRNA(Gly) + glycine + ATP = glycyl-tRNA(Gly) + AMP + diphosphate. This is Glycine--tRNA ligase alpha subunit from Helicobacter pylori (strain G27).